The sequence spans 89 residues: UPF0237 protein CE1668 (89 aa).

In terms of domain architecture, ACT spans 4–78; that stretch reads IMTVTGQDHT…KEQGLVIRIQ (75 aa).

Belongs to the UPF0237 family.

This is UPF0237 protein CE1668 from Corynebacterium efficiens (strain DSM 44549 / YS-314 / AJ 12310 / JCM 11189 / NBRC 100395).